Here is a 419-residue protein sequence, read N- to C-terminus: Gamma-glutamyl phosphate reductase (419 aa).

This sequence belongs to the gamma-glutamyl phosphate reductase family.

It is found in the cytoplasm. The catalysed reaction is L-glutamate 5-semialdehyde + phosphate + NADP(+) = L-glutamyl 5-phosphate + NADPH + H(+). It functions in the pathway amino-acid biosynthesis; L-proline biosynthesis; L-glutamate 5-semialdehyde from L-glutamate: step 2/2. Its function is as follows. Catalyzes the NADPH-dependent reduction of L-glutamate 5-phosphate into L-glutamate 5-semialdehyde and phosphate. The product spontaneously undergoes cyclization to form 1-pyrroline-5-carboxylate. The chain is Gamma-glutamyl phosphate reductase from Oleidesulfovibrio alaskensis (strain ATCC BAA-1058 / DSM 17464 / G20) (Desulfovibrio alaskensis).